Consider the following 337-residue polypeptide: Inositol 2-dehydrogenase (337 aa).

This sequence belongs to the Gfo/Idh/MocA family. In terms of assembly, homotetramer.

The enzyme catalyses myo-inositol + NAD(+) = scyllo-inosose + NADH + H(+). In terms of biological role, involved in the oxidation of myo-inositol (MI) to 2-keto-myo-inositol (2KMI or 2-inosose). The protein is Inositol 2-dehydrogenase of Burkholderia ambifaria (strain MC40-6).